The primary structure comprises 89 residues: Small ribosomal subunit protein uS17 (89 aa).

This sequence belongs to the universal ribosomal protein uS17 family. As to quaternary structure, part of the 30S ribosomal subunit.

One of the primary rRNA binding proteins, it binds specifically to the 5'-end of 16S ribosomal RNA. This chain is Small ribosomal subunit protein uS17, found in Xylella fastidiosa (strain Temecula1 / ATCC 700964).